The sequence spans 696 residues: Zinc finger SWIM domain-containing protein 3 (696 aa).

An SWIM-type zinc finger spans residues V531–Q572.

This is Zinc finger SWIM domain-containing protein 3 (ZSWIM3) from Homo sapiens (Human).